A 488-amino-acid polypeptide reads, in one-letter code: Tocopherol cyclase, chloroplastic (488 aa).

The transit peptide at methionine 1–arginine 76 directs the protein to the chloroplast.

Its subcellular location is the plastid. The protein resides in the chloroplast. It localises to the plastoglobule. The enzyme catalyses delta-tocopherol = 2-methyl-6-phytyl-1,4-benzene-1,4-diol. It carries out the reaction gamma-tocopherol = 2,3-dimethyl-6-phytylbenzene-1,4-diol. It catalyses the reaction delta-tocotrienol = 6-geranylgeranyl-2-methylbenzene-1,4-diol. The catalysed reaction is gamma-tocotrienol = 6-geranylgeranyl-2,3-dimethylbenzene-1,4-diol. Its pathway is cofactor biosynthesis; tocopherol biosynthesis. Its function is as follows. Involved in the synthesis of both tocopherols and tocotrienols (vitamin E), which presumably protect photosynthetic complexes from oxidative stress. Catalyzes the conversion of 2-methyl-6-phytyl-1,4-hydroquinone and 2,3-dimethyl-5-phytyl-1,4-hydroquinone (DMPQ) to delta- and gamma-tocopherol respectively. Also converts 2,3-dimethyl-5-geranylgeranyl-1,4-hydroquinone (DMGQ) to gamma-tocotrienol. In Arabidopsis thaliana (Mouse-ear cress), this protein is Tocopherol cyclase, chloroplastic (VTE1).